Here is a 570-residue protein sequence, read N- to C-terminus: Phytoene desaturase (570 aa).

The chain crosses the membrane as a helical span at residues 547–567 (LFQGFLGALVAILLAYYYLVI).

This sequence belongs to the carotenoid/retinoid oxidoreductase family. Requires NAD(+) as cofactor.

It localises to the membrane. It catalyses the reaction 15-cis-phytoene + A = all-trans-phytofluene + AH2. It carries out the reaction all-trans-phytofluene + A = all-trans-zeta-carotene + AH2. The enzyme catalyses all-trans-zeta-carotene + A = all-trans-neurosporene + AH2. The catalysed reaction is all-trans-neurosporene + A = all-trans-lycopene + AH2. It functions in the pathway carotenoid biosynthesis. Functionally, phytoene desaturase; part of the car gene cluster that mediates the biosynthesis of neurosporaxanthin, a carboxylic apocarotenoid acting as an essential protective pigments and leading to orange pigmentation. Converts phytoene into lycopene via the intermediates phytofluene, zeta-carotene and neurosporene; and further desaturates gamma-carotene into torulene. Neurosporaxanthin is synthesized from geranyl-geranyl pyrophosphate (GGPP) through several enzymatic activities. Phytoene synthase activity performed by the bifunctional enzyme carAR first produces phytoene from geranyl-geranyl pyrophosphate (GGPP). The phytoene dehydrogenase carB then introduces 4 desaturations to lead to lycopene which is substrate of the carotene cyclase activity of carAR that leads to the production of gamma-carotene. CarB then performs a 5th desaturation reaction to yield torulene. Torulene is the substrate of the dioxidase carT that breaks the molecule, removing five carbon atoms to yield beta-apo-4'-carotenal, whereas the aldehyde dehydrogenase carD mediates the last step by converting beta-apo-4'-carotenal into neurosporaxanthin. The polypeptide is Phytoene desaturase (Fusarium fujikuroi (Bakanae and foot rot disease fungus)).